Consider the following 660-residue polypeptide: DNA mismatch repair protein MutL (660 aa).

It belongs to the DNA mismatch repair MutL/HexB family.

Functionally, this protein is involved in the repair of mismatches in DNA. It is required for dam-dependent methyl-directed DNA mismatch repair. May act as a 'molecular matchmaker', a protein that promotes the formation of a stable complex between two or more DNA-binding proteins in an ATP-dependent manner without itself being part of a final effector complex. The sequence is that of DNA mismatch repair protein MutL from Streptococcus equi subsp. zooepidemicus (strain MGCS10565).